The chain runs to 101 residues: MIPGELMAADGEIELNAGRHTASVTVANTGDRPIQVGSHFHFYETNAALSFDREATRGFRLNIAAGTAVRFEPGQTRTVELVALDGDRIVYGFNGKIMGAL.

This sequence belongs to the urease beta subunit family. As to quaternary structure, heterotrimer of UreA (gamma), UreB (beta) and UreC (alpha) subunits. Three heterotrimers associate to form the active enzyme.

The protein localises to the cytoplasm. The enzyme catalyses urea + 2 H2O + H(+) = hydrogencarbonate + 2 NH4(+). It participates in nitrogen metabolism; urea degradation; CO(2) and NH(3) from urea (urease route): step 1/1. This chain is Urease subunit beta, found in Cupriavidus pinatubonensis (strain JMP 134 / LMG 1197) (Cupriavidus necator (strain JMP 134)).